Here is a 196-residue protein sequence, read N- to C-terminus: Pyridoxal 5'-phosphate synthase subunit PdxT (196 aa).

47–49 (GES) is an L-glutamine binding site. Cys79 acts as the Nucleophile in catalysis. L-glutamine contacts are provided by residues Arg106 and 134-135 (IR). Residues His170 and Glu172 each act as charge relay system in the active site.

It belongs to the glutaminase PdxT/SNO family. In the presence of PdxS, forms a dodecamer of heterodimers. Only shows activity in the heterodimer.

It catalyses the reaction aldehydo-D-ribose 5-phosphate + D-glyceraldehyde 3-phosphate + L-glutamine = pyridoxal 5'-phosphate + L-glutamate + phosphate + 3 H2O + H(+). It carries out the reaction L-glutamine + H2O = L-glutamate + NH4(+). The protein operates within cofactor biosynthesis; pyridoxal 5'-phosphate biosynthesis. In terms of biological role, catalyzes the hydrolysis of glutamine to glutamate and ammonia as part of the biosynthesis of pyridoxal 5'-phosphate. The resulting ammonia molecule is channeled to the active site of PdxS. In Halalkalibacterium halodurans (strain ATCC BAA-125 / DSM 18197 / FERM 7344 / JCM 9153 / C-125) (Bacillus halodurans), this protein is Pyridoxal 5'-phosphate synthase subunit PdxT.